Reading from the N-terminus, the 293-residue chain is Glutamyl-Q tRNA(Asp) synthetase (293 aa).

L-glutamate contacts are provided by residues 8 to 12 (RFAPT) and E44. A 'HIGH' region motif is present at residues 11–21 (PTPSGYLHFGS). Zn(2+)-binding residues include C100, C102, Y114, and C118. L-glutamate is bound by residues Y171 and R189. Residues 227–231 (KLGKS) carry the 'KMSKS' region motif. Position 230 (K230) interacts with ATP.

Belongs to the class-I aminoacyl-tRNA synthetase family. GluQ subfamily. Requires Zn(2+) as cofactor.

In terms of biological role, catalyzes the tRNA-independent activation of glutamate in presence of ATP and the subsequent transfer of glutamate onto a tRNA(Asp). Glutamate is transferred on the 2-amino-5-(4,5-dihydroxy-2-cyclopenten-1-yl) moiety of the queuosine in the wobble position of the QUC anticodon. The protein is Glutamyl-Q tRNA(Asp) synthetase of Pseudomonas aeruginosa (strain LESB58).